The primary structure comprises 71 residues: Large ribosomal subunit protein uL29 (71 aa).

Belongs to the universal ribosomal protein uL29 family.

This chain is Large ribosomal subunit protein uL29, found in Methanocella arvoryzae (strain DSM 22066 / NBRC 105507 / MRE50).